Reading from the N-terminus, the 1242-residue chain is DNA excision repair protein ERCC-6-like (1242 aa).

S14 carries the post-translational modification Phosphoserine. The TPR 1 repeat unit spans residues 21 to 54 (YLRYVKEAKEATKNGDLEQALKLFNLAKDIFPNE). In terms of domain architecture, Helicase ATP-binding spans 109-277 (SLYRDGRRGG…WSLFDFACQG (169 aa)). Residue 122–129 (DDMGLGKT) participates in ATP binding. Positions 228–231 (DEAH) match the DEAH box motif. The Helicase C-terminal domain maps to 466–626 (FLMDLLKKLR…PFRYFSKQEL (161 aa)). 2 positions are modified to phosphoserine: S755 and S773. Phosphothreonine is present on T815. Phosphoserine occurs at positions 963, 989, 998, and 1021. Residue T1055 is modified to Phosphothreonine. 3 positions are modified to phosphoserine: S1061, S1090, and S1110. The segment at 1103–1181 (EERLDNSSEA…LSDGQLVDSP (79 aa)) is disordered. Basic and acidic residues-rich tracts occupy residues 1105-1121 (RLDNSSEAKVVEDHLEE) and 1130-1140 (APEHTKEDPSR). The span at 1141 to 1156 (ETLSSENKSSQLSTSK) shows a compositional bias: polar residues. Residues S1173 and S1180 each carry the phosphoserine modification. Residues 1192 to 1225 (YDTLVLHGKELKECGKIQEALDCLVKALDIKSSD) form a TPR 2 repeat.

Belongs to the SNF2/RAD54 helicase family. As to quaternary structure, interacts with PLK1, which phosphorylates it. Both proteins are mutually dependent on each other for correct subcellular localization. Interacts (via N-terminal TPR repeat) with BEND3 (via BEN domains 1 and 3); the interaction is direct. Phosphorylation by PLK1 prevents the association with chromosome arms and restricts its localization to the kinetochore-centromere region.

It is found in the chromosome. The protein resides in the centromere. The protein localises to the kinetochore. It catalyses the reaction ATP + H2O = ADP + phosphate + H(+). Its function is as follows. DNA helicase that acts as a tension sensor that associates with catenated DNA which is stretched under tension until it is resolved during anaphase. Functions as ATP-dependent DNA translocase. Can promote Holliday junction branch migration (in vitro). In Bos taurus (Bovine), this protein is DNA excision repair protein ERCC-6-like (ERCC6L).